The chain runs to 1336 residues: Zinc finger protein 335 (1336 aa).

Disordered stretches follow at residues 1 to 108 and 199 to 222; these read MEEN…LVHS and PTSTSTCLEPAEQPPGEPSSLAQP. Composition is skewed to low complexity over residues 31-45 and 54-65; these read TSEAVSADSTDAATA and SGVGQSSDSGSR. The segment at 247–270 adopts a C2H2-type 1 zinc-finger fold; that stretch reads FKCKMCQYRSSTKATLLRHMRERH. Disordered regions lie at residues 282 to 398 and 415 to 442; these read AGKR…PSSS and VSQSDAENAAPSCQDEADVPPRRRGRPS. A compositionally biased stretch (acidic residues) spans 300-331; it reads EEGPEEEEEDDDIVDAGAIDDLEEDSDYNPAE. The segment covering 339 to 349 has biased composition (low complexity); sequence LRLQRPTPSTL. Basic residues predominate over residues 350–361; the sequence is RPRRRPGRPRKL. Over residues 362–373 the composition is skewed to basic and acidic residues; it reads PRLETSDLHDGI. Positions 378–387 are enriched in polar residues; it reads VSSQSTQSPP. C2H2-type zinc fingers lie at residues 465–487, 495–517, 523–545, 562–584, 590–612, 621–643, 649–672, and 678–701; these read YLCRICGSRFLSHEDLRFHVNSH, FKCLQCSYRSRRWSSLKEHMFNH, YKCDECSYTSVYRKDVIRHAAVH, FPCPVCGRVYPMQKRLTQHMKTH, HMCDKCGKSFKKRYTFKMHLLTH, FKCEFCEFVCEDKKALLNHQLSH, FKCSFCPYRTFREDFLLSHVAVKH, and FACEYCHFSTRHKKNLRLHVRCRH. Disordered stretches follow at residues 732 to 766 and 961 to 1013; these read LKQQHSAAPGPPLSSAGPEAPQEPAPFQPPETPPL and LQCG…AAAS. Residues 752–766 are compositionally biased toward pro residues; that stretch reads PQEPAPFQPPETPPL. Ser-975 and Ser-1006 each carry phosphoserine. 4 C2H2-type zinc fingers span residues 1018–1040, 1046–1068, 1074–1096, and 1102–1125; these read FSCKVCSEAFPSRAEMESHKRAH, FKCPDCPFSARQWPEVRAHMAQH, HQCNQCSFASKNKKDLRRHMLTH, and FSCHVCGQRFNRNGHLKFHIQRLH. A Glycyl lysine isopeptide (Lys-Gly) (interchain with G-Cter in SUMO2) cross-link involves residue Lys-1021. Ser-1148 bears the Phosphoserine mark.

It belongs to the krueppel C2H2-type zinc-finger protein family. As to quaternary structure, interacts with NCOA6; may enhance ligand-dependent transcriptional activation by nuclear hormone receptors. Interacts with CNOT6. Interacts with CNOT9; the interaction is direct. Component of a nuclear receptor-mediated transcription complex composed of at least ZNF335, CCAR2 and EMSY; the complex stimulates the transcription of nuclear receptor target genes such as SOX9 and HOXA1. Within the complex interacts with EMSY and interacts (via C-terminus) with CCAR2. Interacts with members of histone H3'Lys4'(H3K4) methyltransferase complexes ASH2L, CXXC1, KMT2A/MLL1, RBBP5, SETD1A and WDR5. Component of a histone methylation complex composed of at least ZNF335, RBBP5, ASH2L and WDR5; the complex may have histone H3-specific methyltransferase activity, however does not have specificity for 'Lys-4' of histone H3. Interacts with RBBP5 and WDR5. Interacts with ASHL2. Components of this complex may associate with components of the ZNF335-CCAR2-EMSY nuclear receptor-mediated transcription complex to form a complex at least composed of ZNF335, HCFC1, CCAR2, EMSY, MKI67, RBBP5, ASH2L and WDR5. Within this complex also interacts with HCFC1 and MKI67.

The protein localises to the nucleus. In terms of biological role, component or associated component of some histone methyltransferase complexes may regulate transcription through recruitment of those complexes on gene promoters. Enhances ligand-dependent transcriptional activation by nuclear hormone receptors. Plays an important role in neural progenitor cell proliferation and self-renewal through the regulation of specific genes involved brain development, including REST. Also controls the expression of genes involved in somatic development and regulates, for instance, lymphoblast proliferation. This chain is Zinc finger protein 335 (Znf335), found in Rattus norvegicus (Rat).